The primary structure comprises 181 residues: Isopentenyl-diphosphate Delta-isomerase (181 aa).

Positions 24 and 30 each coordinate Mn(2+). A Nudix hydrolase domain is found at 28 to 168 (LLHLAFSVLL…PDTFSVWFPT (141 aa)). Cys-68 is an active-site residue. Mn(2+) is bound at residue His-70. Glu-88 contacts Mg(2+). 2 residues coordinate Mn(2+): Glu-117 and Glu-119. The active site involves Glu-119.

This sequence belongs to the IPP isomerase type 1 family. It depends on Mg(2+) as a cofactor. The cofactor is Mn(2+).

The protein localises to the cytoplasm. It carries out the reaction isopentenyl diphosphate = dimethylallyl diphosphate. Its pathway is isoprenoid biosynthesis; dimethylallyl diphosphate biosynthesis; dimethylallyl diphosphate from isopentenyl diphosphate: step 1/1. Catalyzes the 1,3-allylic rearrangement of the homoallylic substrate isopentenyl (IPP) to its highly electrophilic allylic isomer, dimethylallyl diphosphate (DMAPP). This chain is Isopentenyl-diphosphate Delta-isomerase, found in Aliivibrio fischeri (strain MJ11) (Vibrio fischeri).